The following is a 107-amino-acid chain: High mobility group protein HMG-I/HMG-Y (107 aa).

A disordered region spans residues 1–107 (MSESSSKSSQ…ISQESSEEEQ (107 aa)). The residue at position 2 (Ser2) is an N-acetylserine. Lys7 carries the post-translational modification N6-acetyllysine. ADP-ribosylserine is present on Ser8. Ser9 is subject to ADP-ribosylserine; alternate. Ser9 carries the post-translational modification Phosphoserine; alternate. Lys15 bears the N6-acetyllysine; alternate mark. Residue Lys15 forms a Glycyl lysine isopeptide (Lys-Gly) (interchain with G-Cter in SUMO2); alternate linkage. Over residues 15-24 (KQEKDGTEKR) the composition is skewed to basic and acidic residues. The segment at residues 21–31 (TEKRGRGRPRK) is a DNA-binding region (a.T hook 1). Asymmetric dimethylarginine; alternate is present on Arg26. Arg26 carries the post-translational modification Omega-N-methylarginine; alternate. Arg26 is subject to Symmetric dimethylarginine; alternate. Ser36 bears the Phosphoserine; by HIPK2 and CDC2 mark. Thr39 and Val42 each carry phosphothreonine. Phosphoserine is present on residues Ser44 and Ser49. The residue at position 53 (Thr53) is a Phosphothreonine; by HIPK2 and CDC2. Residues 53 to 63 (TPKRPRGRPKG) constitute a DNA-binding region (a.T hook 2). Positions 53–77 (TPKRPRGRPKGSKNKGAAKTRKTTT) are interaction with HIPK2. Over residues 55-74 (KRPRGRPKGSKNKGAAKTRK) the composition is skewed to basic residues. Asymmetric dimethylarginine; by PRMT6; alternate is present on residues Arg58 and Arg60. Omega-N-methylarginine; by PRMT6; alternate occurs at positions 58 and 60. Lys67 is modified (phosphothreonine). The residue at position 78 (Thr78) is a Phosphothreonine; by HIPK2 and CDC2. The a.T hook 3 DNA-binding region spans 78–89 (TPGRKPRGRPKK). Residues 93–107 (EEEEGISQESSEEEQ) are compositionally biased toward acidic residues. Phosphoserine is present on Ser99. A phosphoserine; by CK mark is found at Ser102 and Ser103.

It belongs to the HMGA family. In terms of assembly, interacts with HIPK2. Constitutively phosphorylated on two or three sites. Hyperphosphorylated at early stages of apoptosis, followed by dephosphorylation and methylation, which coincides with chromatin condensation. Isoforms HMG-I and HMG-Y can be phosphorylated by HIPK2. Phosphorylation of HMG-I at Ser-36, Thr-53 and Thr-78 and of HMG-Y at Thr-42 and Thr-67 by HIPK2 modulates DNA-binding affinity. Post-translationally, HMG-Y is not methylated. In terms of processing, methylation at Arg-58 is mutually exclusive with methylation at Arg-60.

The protein resides in the nucleus. It is found in the chromosome. Functionally, HMG-I/Y bind preferentially to the minor groove of A+T rich regions in double-stranded DNA. It is suggested that these proteins could function in nucleosome phasing and in the 3'-end processing of mRNA transcripts. They are also involved in the transcription regulation of genes containing, or in close proximity to A+T-rich regions. This chain is High mobility group protein HMG-I/HMG-Y (HMGA1), found in Homo sapiens (Human).